The sequence spans 266 residues: Ankyrin repeat domain-containing protein 45 (266 aa).

2 stretches are compositionally biased toward acidic residues: residues 1–11 (MESEGPPESES) and 18–32 (QEEENEEEEAQEPEE). Residues 1-43 (MESEGPPESESSEFFSQQEEENEEEEAQEPEETGPKNPLLQPA) form a disordered region. 2 ANK repeats span residues 76–105 (VGRNLLYAACMAGQSDVIRALAKYGVNLNE) and 109–138 (RGYTLLHCAAAWGRLETLKALVELDVDIEA).

It localises to the cytoplasm. The protein localises to the midbody. Its subcellular location is the midbody ring. The protein resides in the cleavage furrow. Functionally, may play a role during cell division. The protein is Ankyrin repeat domain-containing protein 45 of Homo sapiens (Human).